The primary structure comprises 339 residues: Fructose-1,6-bisphosphatase class 1 (339 aa).

Residues E92, D114, L116, and D117 each contribute to the Mg(2+) site. Substrate is bound by residues 117–120 (DGSS), N213, and K279. E285 is a binding site for Mg(2+).

It belongs to the FBPase class 1 family. Homotetramer. Mg(2+) serves as cofactor.

Its subcellular location is the cytoplasm. The catalysed reaction is beta-D-fructose 1,6-bisphosphate + H2O = beta-D-fructose 6-phosphate + phosphate. The protein operates within carbohydrate biosynthesis; gluconeogenesis. This Acidovorax sp. (strain JS42) protein is Fructose-1,6-bisphosphatase class 1.